The sequence spans 388 residues: Chorismate synthase (388 aa).

Residues arginine 39 and arginine 45 each contribute to the NADP(+) site. Positions 95 to 118 are disordered; that stretch reads EKNEKSRRVSRPRPGHADLVGGMK. Residues 130–132, 251–252, glycine 296, 311–315, and arginine 337 each bind FMN; these read RSS, NA, and KPIPT.

Belongs to the chorismate synthase family. In terms of assembly, homotetramer. The cofactor is FMNH2.

The catalysed reaction is 5-O-(1-carboxyvinyl)-3-phosphoshikimate = chorismate + phosphate. The protein operates within metabolic intermediate biosynthesis; chorismate biosynthesis; chorismate from D-erythrose 4-phosphate and phosphoenolpyruvate: step 7/7. Its function is as follows. Catalyzes the anti-1,4-elimination of the C-3 phosphate and the C-6 proR hydrogen from 5-enolpyruvylshikimate-3-phosphate (EPSP) to yield chorismate, which is the branch point compound that serves as the starting substrate for the three terminal pathways of aromatic amino acid biosynthesis. This reaction introduces a second double bond into the aromatic ring system. This is Chorismate synthase from Listeria innocua serovar 6a (strain ATCC BAA-680 / CLIP 11262).